Here is a 141-residue protein sequence, read N- to C-terminus: Probable trafficking protein particle complex subunit 2 (141 aa).

This sequence belongs to the TRAPP small subunits family. Sedlin subfamily. In terms of assembly, part of the multisubunit TRAPP (transport protein particle) complex.

It localises to the cytoplasm. It is found in the perinuclear region. Its subcellular location is the endoplasmic reticulum. The protein resides in the golgi apparatus. May play a role in vesicular transport from endoplasmic reticulum to Golgi. Required for the systemic spread of the RNAi response. This chain is Probable trafficking protein particle complex subunit 2 (sedl-1), found in Caenorhabditis elegans.